A 222-amino-acid polypeptide reads, in one-letter code: Cytidylate kinase (222 aa).

11–19 is an ATP binding site; that stretch reads GPSGSGKST.

Belongs to the cytidylate kinase family. Type 1 subfamily.

It is found in the cytoplasm. It carries out the reaction CMP + ATP = CDP + ADP. It catalyses the reaction dCMP + ATP = dCDP + ADP. In Ureaplasma urealyticum serovar 10 (strain ATCC 33699 / Western), this protein is Cytidylate kinase.